Reading from the N-terminus, the 40-residue chain is Photosystem II reaction center protein J (40 aa).

The helical transmembrane segment at 8 to 28 (IPLWLIGTVAGILIIGLLGVF) threads the bilayer.

This sequence belongs to the PsbJ family. PSII is composed of 1 copy each of membrane proteins PsbA, PsbB, PsbC, PsbD, PsbE, PsbF, PsbH, PsbI, PsbJ, PsbK, PsbL, PsbM, PsbT, PsbX, PsbY, PsbZ, Psb30/Ycf12, at least 3 peripheral proteins of the oxygen-evolving complex and a large number of cofactors. It forms dimeric complexes.

It localises to the plastid. It is found in the chloroplast thylakoid membrane. In terms of biological role, one of the components of the core complex of photosystem II (PSII). PSII is a light-driven water:plastoquinone oxidoreductase that uses light energy to abstract electrons from H(2)O, generating O(2) and a proton gradient subsequently used for ATP formation. It consists of a core antenna complex that captures photons, and an electron transfer chain that converts photonic excitation into a charge separation. This Nandina domestica (Heavenly bamboo) protein is Photosystem II reaction center protein J.